Here is a 194-residue protein sequence, read N- to C-terminus: Cupin-domain-containing oxidoreductase virC (194 aa).

A Cupin type-2 domain is found at 106–175; the sequence is IDFAPNVISP…GTLPGRMMWV (70 aa).

This sequence belongs to the virC family.

The protein operates within secondary metabolite biosynthesis. Its function is as follows. Cupin-domain-containing oxidoreductase; part of the gene cluster that mediates the biosynthesis of virensols and trichoxide, fungal natural products that contain or are derived from a salicylaldehyde core. The pathway begins with the synthesis of the reduced chain in virensol C by the highly reducing polyketide synthase virA via condensation of one acetate and 8 malonate units. VirA has interesting programming rules since the first 2 ketides are fully reduced, the 3 following ketides undergo beta-dehydration, and the last 3 ketides are only reduced to beta-hydroxys to yield the trihydroxy portion. The production of aldehyde virensol C by virA alone is surprising, since virA does not contain a reductase (R) domain that is typically associated with reductive product release in HRPKS. The cupin-domain enzyme virC is involved in enhancing virA product turnover. The short-chain dehydrogenase virB then oxidizes the C-7 alcohol of virensol C to a ketone, yielding virensol D. Virensol D is further transformed to salicylaldehyde 5-deoxyaurocitrin by the short-chain dehydrogenase virD. VirD catalyzes the dehydrogenation of C-3 to form the beta-ketone aldehyde, which is followed by the generation of the nucleophilic C-2 that is required for the intramolecular aldol condensation between C-2 and C-7, itself followed by dehydration and aromatization which leads to salicylaldehyde 5-deoxyaurocitrin. While the dehydrogenation of virensol D is definitely catalyzed by virD, the aldol condensation and dehydration may be uncatalyzed or assisted by virD. The short chain dehydrogenase virG then converts salicylaldehyde 5-deoxyaurocitrin into virensol B which is further hydroxylated by the cytochrome P450 monooxygenase virE to yield the hydroquinone virensol A. VirI then may oxidize virensol A to form the quinone, while virH performs the epoxidation. Finally, the two remaining short-chain dehydrogenases, virK and virL, are probably responsible for reducing the ketones to the corresponding alcohols to furnish the epoxycyclohexanol structure in trichoxide. The sequence is that of Cupin-domain-containing oxidoreductase virC from Hypocrea virens (strain Gv29-8 / FGSC 10586) (Gliocladium virens).